A 507-amino-acid chain; its full sequence is MTRPKPVVLCILDGWGISSRPEQSAPDQARTPNFDRLMRGCPHGTLVTFGPDVGLPKGQMGNSEVGHTNIGAGRVVAMDLGQIDLAIEDGSFYENAALGEFIRKLKASGGTAHLMGVVSDGGVHGHIQHVIAAARAVTDKGVPVVIHVVTDGRDVPPQSAMGFVTELLGELPEAARIGTVVGRYYAMDRDNRWERVARAYAAMVRAEGLPAPDAAQAVADAYARGETDEFIQPTVVEGYAGAKDGDGFFCLNFRADRAREILAAIGQPDFSAFDTGRRPEWAALLGMVDYSTSHDEYMQAAYPKRQVVNTLGAWVAARGLRQFRLAETEKYPHVTFFLNGGKETPEEGEDRFMPASPKVATYDLAPEMAAPEVSAKLVEAIEAGYDLIVVNYANPDMVGHTGSLPAAIRACEAVDKGLGMMLEALEKAGGAAVVIADHGNCETTIDPETGGPHTAHTTNPVPVIVFGGPEGAKLRNGRLADVAPTVLDLMGLDLPPEMTGTSLIGRA.

Residues Asp-13 and Ser-63 each contribute to the Mn(2+) site. Ser-63 functions as the Phosphoserine intermediate in the catalytic mechanism. Substrate-binding positions include His-124, 153–154 (RD), Arg-183, Arg-189, 254–257 (RADR), and Lys-330. The Mn(2+) site is built by Asp-396, His-400, Asp-437, His-438, and His-456.

It belongs to the BPG-independent phosphoglycerate mutase family. As to quaternary structure, monomer. Requires Mn(2+) as cofactor.

It carries out the reaction (2R)-2-phosphoglycerate = (2R)-3-phosphoglycerate. Its pathway is carbohydrate degradation; glycolysis; pyruvate from D-glyceraldehyde 3-phosphate: step 3/5. Its function is as follows. Catalyzes the interconversion of 2-phosphoglycerate and 3-phosphoglycerate. The polypeptide is 2,3-bisphosphoglycerate-independent phosphoglycerate mutase (Paracoccus denitrificans (strain Pd 1222)).